The primary structure comprises 312 residues: Olfactory receptor 2M3 (312 aa).

At 1–25 the chain is on the extracellular side; it reads MARENSTFNSDFILLGIFNHSPTHT. N5 carries N-linked (GlcNAc...) asparagine glycosylation. Residues 26–49 form a helical membrane-spanning segment; the sequence is FLFFLVLAIFSVAFMGNSVMVLLI. The Cytoplasmic segment spans residues 50–57; it reads YLDTQLHT. A helical membrane pass occupies residues 58–79; the sequence is PMYLLLSQLSLMDLMLICTTVP. Residues 80–100 are Extracellular-facing; that stretch reads KMAFNYLSGSKSISMAGCATQ. C97 and C189 are oxidised to a cystine. A helical transmembrane segment spans residues 101 to 120; sequence IFFYTSLLGSECFLLAVMAY. At 121–139 the chain is on the cytoplasmic side; the sequence is DRYTAICHPLRYTNLMSPK. The helical transmembrane segment at 140 to 158 threads the bilayer; sequence ICGLMTAFSWILGSTDGII. The Extracellular segment spans residues 159 to 195; sequence DVVATFSFSYCGSREIAHFFCDFPSLLILSCSDTSIF. A helical membrane pass occupies residues 196–219; it reads EKILFICCIVMIVFPVAIIIASYA. Over 220–236 the chain is Cytoplasmic; that stretch reads RVILAVIHMGSGEGRRK. Residues 237–259 form a helical membrane-spanning segment; the sequence is AFTTCSSHLLVVGMYYGAALFMY. At 260-272 the chain is on the extracellular side; sequence IRPTSDRSPTQDK. Residues 273-292 form a helical membrane-spanning segment; it reads MVSVFYTILTPMLNPLIYSL. The Cytoplasmic segment spans residues 293–312; the sequence is RNKEVTRAFMKILGKGKSGE.

It belongs to the G-protein coupled receptor 1 family.

It is found in the cell membrane. In terms of biological role, odorant receptor. In Homo sapiens (Human), this protein is Olfactory receptor 2M3 (OR2M3).